Consider the following 586-residue polypeptide: Potassium-transporting ATPase potassium-binding subunit (586 aa).

Transmembrane regions (helical) follow at residues 11 to 31 (LFLV…AKVF), 67 to 87 (AVAV…ILML), 136 to 156 (GLAV…IAVI), 179 to 199 (LYVL…QGVI), 279 to 299 (VEIF…GVMV), 306 to 326 (WAIL…LQGV), 351 to 371 (FGLA…CGAV), 381 to 401 (LGGM…GGVG), 403 to 423 (GLYT…LMIG), 442 to 462 (IITV…AMIT), 507 to 527 (ILGS…VLAM), and 551 to 571 (FALW…FPAL).

It belongs to the KdpA family. In terms of assembly, the system is composed of three essential subunits: KdpA, KdpB and KdpC.

The protein resides in the cell inner membrane. Its function is as follows. Part of the high-affinity ATP-driven potassium transport (or Kdp) system, which catalyzes the hydrolysis of ATP coupled with the electrogenic transport of potassium into the cytoplasm. This subunit binds the periplasmic potassium ions and delivers the ions to the membrane domain of KdpB through an intramembrane tunnel. This Geobacter metallireducens (strain ATCC 53774 / DSM 7210 / GS-15) protein is Potassium-transporting ATPase potassium-binding subunit.